Consider the following 469-residue polypeptide: Adenosylhomocysteinase (469 aa).

Threonine 63, aspartate 139, and glutamate 164 together coordinate substrate. An NAD(+)-binding site is contributed by 165 to 167 (TTT). Positions 194 and 198 each coordinate substrate. NAD(+) is bound by residues asparagine 199, 228–233 (GYGDVG), glutamate 251, asparagine 300, 321–323 (IGH), and asparagine 375.

It belongs to the adenosylhomocysteinase family. It depends on NAD(+) as a cofactor.

The protein resides in the cytoplasm. It catalyses the reaction S-adenosyl-L-homocysteine + H2O = L-homocysteine + adenosine. The protein operates within amino-acid biosynthesis; L-homocysteine biosynthesis; L-homocysteine from S-adenosyl-L-homocysteine: step 1/1. May play a key role in the regulation of the intracellular concentration of adenosylhomocysteine. The chain is Adenosylhomocysteinase from Pseudomonas putida (strain GB-1).